The chain runs to 366 residues: tRNA/tmRNA (uracil-C(5))-methyltransferase (366 aa).

Residues Q190, Y218, N223, E239, and D299 each contribute to the S-adenosyl-L-methionine site. C324 (nucleophile) is an active-site residue. The Proton acceptor role is filled by E358.

Belongs to the class I-like SAM-binding methyltransferase superfamily. RNA M5U methyltransferase family. TrmA subfamily.

The enzyme catalyses uridine(54) in tRNA + S-adenosyl-L-methionine = 5-methyluridine(54) in tRNA + S-adenosyl-L-homocysteine + H(+). It catalyses the reaction uridine(341) in tmRNA + S-adenosyl-L-methionine = 5-methyluridine(341) in tmRNA + S-adenosyl-L-homocysteine + H(+). Its function is as follows. Dual-specificity methyltransferase that catalyzes the formation of 5-methyluridine at position 54 (m5U54) in all tRNAs, and that of position 341 (m5U341) in tmRNA (transfer-mRNA). This is tRNA/tmRNA (uracil-C(5))-methyltransferase from Citrobacter koseri (strain ATCC BAA-895 / CDC 4225-83 / SGSC4696).